Consider the following 746-residue polypeptide: Actin filament-associated protein 1-like 1 (746 aa).

The tract at residues 88–206 (EDQKKEPEAN…RLTHQWPSEE (119 aa)) is disordered. Residues 98-107 (HTVTKPSKTD) are compositionally biased toward polar residues. Over residues 108 to 119 (SPPPLPNTPPPE) the composition is skewed to pro residues. The segment covering 139 to 148 (SRSSSSPPNS) has biased composition (low complexity). Residues 214-310 (DCHICAFLLR…WLHVVRDVTG (97 aa)) enclose the PH 1 domain. Residues 336–371 (EKQTSDSDSMPSGESARDIRENGKPKRGALSELTGT) form a disordered region. The segment covering 350-359 (SARDIRENGK) has biased composition (basic and acidic residues). The region spanning 406–497 (RCGYVGVLVN…WLGVLLAETG (92 aa)) is the PH 2 domain. Disordered stretches follow at residues 539–596 (EVPF…TRAQ) and 723–746 (PSIY…KKGT). The segment covering 562-575 (SFSSSDTGKPSPQI) has biased composition (polar residues). Positions 591–682 (GKTRAQEDAR…VKENLKKSLA (92 aa)) form a coiled coil. Positions 736-746 (KAKEWESKKGT) are enriched in basic and acidic residues.

The protein resides in the cytoplasm. The protein localises to the cell projection. It localises to the podosome. Its subcellular location is the invadopodium. It is found in the cytoskeleton. The protein resides in the stress fiber. Its function is as follows. May be involved in podosome and invadosome formation. The polypeptide is Actin filament-associated protein 1-like 1 (afap1l1) (Danio rerio (Zebrafish)).